The primary structure comprises 327 residues: Ribosomal RNA large subunit methyltransferase F (327 aa).

Residues 1–24 are disordered; the sequence is MPRKTSSQPRPAEPKAVLHPRNRH.

The protein belongs to the methyltransferase superfamily. METTL16/RlmF family.

Its subcellular location is the cytoplasm. It catalyses the reaction adenosine(1618) in 23S rRNA + S-adenosyl-L-methionine = N(6)-methyladenosine(1618) in 23S rRNA + S-adenosyl-L-homocysteine + H(+). In terms of biological role, specifically methylates the adenine in position 1618 of 23S rRNA. The sequence is that of Ribosomal RNA large subunit methyltransferase F from Stutzerimonas stutzeri (strain A1501) (Pseudomonas stutzeri).